Here is a 1207-residue protein sequence, read N- to C-terminus: Systemin receptor SR160 (1207 aa).

Residues 1–34 form the signal peptide; sequence MKAHKTVFNQHPLSLNKLFFVLLLIFFLPPASPA. The short motif at 71–78 is the Cys pair 1 element; sequence CSFTGVSC. 20 LRR repeats span residues 109–131, 135–157, 161–181, 186–207, 213–234, 235–257, 258–280, 282–304, 305–325, 329–350, 353–375, 378–401, 402–423, 428–450, 452–474, 476–499, 500–523, 524–547, 548–570, and 572–594; these read NLES…AKSQ, TLDS…SSFG, NLKS…EMLK, SLQV…PWVS, ELEF…LDFK, NLSY…KDCS, NLQH…LSSC, KLSF…PSES, LQYL…QLAD, TVVE…SLGE, SLEL…TLLK, NIKT…SNLP, KLET…GICK, NLKV…LSNC, QLVS…LGSL, KLKD…MYLQ, ALEN…SNCT, KLNW…GRLS, NLAI…LGNC, and SLIW…LFKQ. A glycan (N-linked (GlcNAc...) asparagine) is linked at Asn-119. Residues Asn-166 and Asn-196 are each glycosylated (N-linked (GlcNAc...) asparagine). 2 N-linked (GlcNAc...) asparagine glycosylation sites follow: Asn-235 and Asn-245. Asn-287 carries an N-linked (GlcNAc...) asparagine glycan. N-linked (GlcNAc...) asparagine glycosylation is found at Asn-339 and Asn-363. Residues Asn-412 and Asn-449 are each glycosylated (N-linked (GlcNAc...) asparagine). A glycan (N-linked (GlcNAc...) asparagine) is linked at Asn-521. 4 N-linked (GlcNAc...) asparagine glycosylation sites follow: Asn-556, Asn-584, Asn-646, and Asn-662. LRR repeat units lie at residues 664 to 686, 688 to 711, 712 to 735, and 736 to 758; these read SMIF…LGAM, YLSI…GGLK, NVAI…TSLT, and LLGE…APFD. Asn-724, Asn-746, and Asn-767 each carry an N-linked (GlcNAc...) asparagine glycan. The short motif at 771–779 is the Cys pair 2 element; that stretch reads CGYPLPLPC. Residues 803–823 form a helical membrane-spanning segment; it reads SVAMGLLFSLFCIFGLIIVAI. Residues 888 to 1163 form the Protein kinase domain; the sequence is FHNDSLVGSG…IQVMAMFKEI (276 aa). ATP is bound by residues 894 to 902 and Lys-916; that span reads VGSGGFGDV. The active-site Proton acceptor is the Asp-1014.

Belongs to the protein kinase superfamily. Ser/Thr protein kinase family. Glycosylated.

Its subcellular location is the cell membrane. The enzyme catalyses L-seryl-[protein] + ATP = O-phospho-L-seryl-[protein] + ADP + H(+). The catalysed reaction is L-threonyl-[protein] + ATP = O-phospho-L-threonyl-[protein] + ADP + H(+). Its function is as follows. Receptor with a serine/threonine-protein kinase activity. Involved in the perception of systemin, a peptide hormone responsible for the systemic activation of defense genes in leaves of wounded plants. May also regulate, in response to brassinosteroid binding, a signaling cascade involved in plant development. This is Systemin receptor SR160 from Solanum peruvianum (Peruvian tomato).